The sequence spans 346 residues: Glycerol-1-phosphate dehydrogenase [NAD(P)+] (346 aa).

NAD(+) contacts are provided by residues 93-97 (GTIID) and 115-118 (TTAS). Asp-120 contributes to the substrate binding site. Ser-124 contacts NAD(+). Asp-167 serves as a coordination point for substrate. Residues Asp-167 and His-247 each coordinate Zn(2+). His-251 contacts substrate. His-263 is a binding site for Zn(2+).

The protein belongs to the glycerol-1-phosphate dehydrogenase family. It depends on Zn(2+) as a cofactor.

It localises to the cytoplasm. The enzyme catalyses sn-glycerol 1-phosphate + NAD(+) = dihydroxyacetone phosphate + NADH + H(+). It catalyses the reaction sn-glycerol 1-phosphate + NADP(+) = dihydroxyacetone phosphate + NADPH + H(+). It participates in membrane lipid metabolism; glycerophospholipid metabolism. Catalyzes the NAD(P)H-dependent reduction of dihydroxyacetonephosphate (DHAP or glycerone phosphate) to glycerol 1-phosphate (G1P). The G1P thus generated is used as the glycerophosphate backbone of phospholipids in the cellular membranes of Archaea. This is Glycerol-1-phosphate dehydrogenase [NAD(P)+] from Pyrococcus furiosus (strain ATCC 43587 / DSM 3638 / JCM 8422 / Vc1).